We begin with the raw amino-acid sequence, 502 residues long: 2-isopropylmalate synthase (502 aa).

Mn(2+) is bound by residues D1, H189, H191, and N225. One can recognise a Pyruvate carboxyltransferase domain in the interval 1-254 (DGEQALQASL…STNINYKEIY (254 aa)). The interval 379 to 502 (CLKFFSVQSI…VNKKLQELKK (124 aa)) is regulatory domain.

The protein belongs to the alpha-IPM synthase/homocitrate synthase family. LeuA type 1 subfamily. As to quaternary structure, homodimer. The cofactor is Mn(2+).

It is found in the cytoplasm. It carries out the reaction 3-methyl-2-oxobutanoate + acetyl-CoA + H2O = (2S)-2-isopropylmalate + CoA + H(+). The protein operates within amino-acid biosynthesis; L-leucine biosynthesis; L-leucine from 3-methyl-2-oxobutanoate: step 1/4. In terms of biological role, catalyzes the condensation of the acetyl group of acetyl-CoA with 3-methyl-2-oxobutanoate (2-ketoisovalerate) to form 3-carboxy-3-hydroxy-4-methylpentanoate (2-isopropylmalate). The protein is 2-isopropylmalate synthase of Buchnera aphidicola subsp. Macrosiphoniella ludovicianae.